The sequence spans 84 residues: U8-theraphotoxin-Hhn1b (84 aa).

A signal peptide spans 1–21; the sequence is MKVVLIVCLVWVMAMMELVSC. Cystine bridges form between cysteine 23–cysteine 35, cysteine 29–cysteine 44, cysteine 34–cysteine 67, and cysteine 54–cysteine 75.

Belongs to the AVIT (prokineticin) family. As to expression, expressed by the venom gland.

It localises to the secreted. The polypeptide is U8-theraphotoxin-Hhn1b (Cyriopagopus hainanus (Chinese bird spider)).